Reading from the N-terminus, the 298-residue chain is Phospholipase A1 (298 aa).

Cys-4 and Cys-87 are oxidised to a cystine. Asn-88 and Asn-122 each carry an N-linked (GlcNAc...) asparagine glycan. Ser-134 acts as the Nucleophile in catalysis. The active-site Charge relay system is the Asp-162. 2 disulfides stabilise this stretch: Cys-173-Cys-178 and Cys-216-Cys-225. The Charge relay system role is filled by His-227. 3 disulfides stabilise this stretch: Cys-242–Cys-266, Cys-243–Cys-291, and Cys-259–Cys-264.

Belongs to the AB hydrolase superfamily. Lipase family. As to expression, expressed by the venom gland.

The protein resides in the secreted. It catalyses the reaction a 1,2-diacyl-sn-glycero-3-phosphocholine + H2O = a 2-acyl-sn-glycero-3-phosphocholine + a fatty acid + H(+). Catalyzes the hydrolysis of phosphatidylcholine with phospholipase A1 activity. May act as an allergen and induce hemolytic activity. This is Phospholipase A1 from Vespula squamosa (Southern yellow jacket).